A 900-amino-acid polypeptide reads, in one-letter code: Chaperone protein ClpB 2 (900 aa).

One can recognise a Clp R domain in the interval 15 to 154; the sequence is PDRFSDPAWE…ESLLRQPSVS (140 aa). Repeat stretches follow at residues 18-81 and 91-154; these read FSDP…LADQ and IGED…PSVS. A disordered region spans residues 151 to 183; sequence PSVSPAPAPPPVPTAASAPAPTPRSAPAPRVMA. The segment covering 154-163 has biased composition (pro residues); it reads SPAPAPPPVP. The tract at residues 191–376 is NBD1; that stretch reads ELEREPSALE…RRFQQVLIRE (186 aa). Residue 244–251 participates in ATP binding; that stretch reads GEPGVGKT. Positions 377 to 581 are linker; that stretch reads PDLELSLEIL…IADLVARWTG (205 aa). Residues 427-557 are a coiled coil; it reads IDLIDEAAAQ…LEASQAEAQS (131 aa). An NBD2 region spans residues 591-803; that stretch reads ERRKLLALES…RIDEVIRFRP (213 aa). An ATP-binding site is contributed by 641 to 648; the sequence is GPTGVGKT. The C-terminal stretch occupies residues 804–900; it reads LKVKDLVRIV…GASLEFEPLE (97 aa).

The protein belongs to the ClpA/ClpB family. In terms of assembly, homohexamer. The oligomerization is ATP-dependent.

It localises to the cytoplasm. Part of a stress-induced multi-chaperone system, it is involved in the recovery of the cell from heat-induced damage, in cooperation with DnaK, DnaJ and GrpE. Acts before DnaK, in the processing of protein aggregates. Protein binding stimulates the ATPase activity; ATP hydrolysis unfolds the denatured protein aggregates, which probably helps expose new hydrophobic binding sites on the surface of ClpB-bound aggregates, contributing to the solubilization and refolding of denatured protein aggregates by DnaK. This chain is Chaperone protein ClpB 2 (clpB2), found in Parasynechococcus marenigrum (strain WH8102).